The chain runs to 282 residues: ATP synthase gamma chain (282 aa).

It belongs to the ATPase gamma chain family. F-type ATPases have 2 components, CF(1) - the catalytic core - and CF(0) - the membrane proton channel. CF(1) has five subunits: alpha(3), beta(3), gamma(1), delta(1), epsilon(1). CF(0) has three main subunits: a, b and c.

It is found in the cell membrane. Functionally, produces ATP from ADP in the presence of a proton gradient across the membrane. The gamma chain is believed to be important in regulating ATPase activity and the flow of protons through the CF(0) complex. In Clostridium botulinum (strain Kyoto / Type A2), this protein is ATP synthase gamma chain.